Consider the following 190-residue polypeptide: Holliday junction branch migration complex subunit RuvA (190 aa).

The interval 1-65 (MIGTLSGTVE…DGVSQLYGFA (65 aa)) is domain I. Residues 66–137 (NREEQNCMRM…LTPQVQKFEL (72 aa)) are domain II. The interval 137–141 (LNRFA) is flexible linker. The tract at residues 142 to 190 (ATTRTDSEAVAALLSLGYERTAALGALQKVGVCDSTEDAVRRALLELSK) is domain III.

It belongs to the RuvA family. Homotetramer. Forms an RuvA(8)-RuvB(12)-Holliday junction (HJ) complex. HJ DNA is sandwiched between 2 RuvA tetramers; dsDNA enters through RuvA and exits via RuvB. An RuvB hexamer assembles on each DNA strand where it exits the tetramer. Each RuvB hexamer is contacted by two RuvA subunits (via domain III) on 2 adjacent RuvB subunits; this complex drives branch migration. In the full resolvosome a probable DNA-RuvA(4)-RuvB(12)-RuvC(2) complex forms which resolves the HJ.

It is found in the cytoplasm. The RuvA-RuvB-RuvC complex processes Holliday junction (HJ) DNA during genetic recombination and DNA repair, while the RuvA-RuvB complex plays an important role in the rescue of blocked DNA replication forks via replication fork reversal (RFR). RuvA specifically binds to HJ cruciform DNA, conferring on it an open structure. The RuvB hexamer acts as an ATP-dependent pump, pulling dsDNA into and through the RuvAB complex. HJ branch migration allows RuvC to scan DNA until it finds its consensus sequence, where it cleaves and resolves the cruciform DNA. In Anaplasma marginale (strain Florida), this protein is Holliday junction branch migration complex subunit RuvA.